A 416-amino-acid polypeptide reads, in one-letter code: UDP-N-acetylmuramoylalanine--D-glutamate ligase (416 aa).

104–110 (GSNGKST) is a binding site for ATP.

Belongs to the MurCDEF family.

It localises to the cytoplasm. It carries out the reaction UDP-N-acetyl-alpha-D-muramoyl-L-alanine + D-glutamate + ATP = UDP-N-acetyl-alpha-D-muramoyl-L-alanyl-D-glutamate + ADP + phosphate + H(+). It functions in the pathway cell wall biogenesis; peptidoglycan biosynthesis. Its function is as follows. Cell wall formation. Catalyzes the addition of glutamate to the nucleotide precursor UDP-N-acetylmuramoyl-L-alanine (UMA). The chain is UDP-N-acetylmuramoylalanine--D-glutamate ligase from Francisella tularensis subsp. mediasiatica (strain FSC147).